The primary structure comprises 188 residues: Segregation and condensation protein B (188 aa).

The protein belongs to the ScpB family. Homodimer. Homodimerization may be required to stabilize the binding of ScpA to the Smc head domains. Component of a cohesin-like complex composed of ScpA, ScpB and the Smc homodimer, in which ScpA and ScpB bind to the head domain of Smc. The presence of the three proteins is required for the association of the complex with DNA.

It is found in the cytoplasm. Participates in chromosomal partition during cell division. May act via the formation of a condensin-like complex containing Smc and ScpA that pull DNA away from mid-cell into both cell halves. The sequence is that of Segregation and condensation protein B from Lactococcus lactis subsp. lactis (strain IL1403) (Streptococcus lactis).